The chain runs to 212 residues: MTLGLVGRKLGMTRVFTEDGVSIPVTVIEVEANRVTQLKTLETDGYTAVQVTTGVKKASRLTKAEAGHFAKAEVEAGRGLWEFRLNDGEGADLTVGSELKVDIFADVKKADVTGISKGKGFAGVVKRWNFRTQDMTHGNSRSHRVPGSIGQNQSPGKVFKGKKMAGHLGCERVTVQSLDIVRVDVERNLLLIKGAVPGATNGDVIVKPAVKA.

The disordered stretch occupies residues 135–156 (MTHGNSRSHRVPGSIGQNQSPG). Position 153 is an N5-methylglutamine (glutamine 153).

Belongs to the universal ribosomal protein uL3 family. As to quaternary structure, part of the 50S ribosomal subunit. Forms a cluster with proteins L14 and L19. Post-translationally, methylated by PrmB.

One of the primary rRNA binding proteins, it binds directly near the 3'-end of the 23S rRNA, where it nucleates assembly of the 50S subunit. The protein is Large ribosomal subunit protein uL3 of Tolumonas auensis (strain DSM 9187 / NBRC 110442 / TA 4).